We begin with the raw amino-acid sequence, 748 residues long: Translation factor GUF1 homolog 1, mitochondrial (748 aa).

A mitochondrion-targeting transit peptide spans 1–29 (MRVGCCLLLKPIRQRLCTASISSRHIMRW). Residues 94–276 (SHIRNFAVVA…AIIERVPPPT (183 aa)) enclose the tr-type G domain. Residues 103–110 (AHVDHGKT), 167–171 (DTPGH), and 221–224 (TKMD) each bind GTP.

This sequence belongs to the TRAFAC class translation factor GTPase superfamily. Classic translation factor GTPase family. LepA subfamily.

The protein localises to the mitochondrion inner membrane. The catalysed reaction is GTP + H2O = GDP + phosphate + H(+). Functionally, promotes mitochondrial protein synthesis. May act as a fidelity factor of the translation reaction, by catalyzing a one-codon backward translocation of tRNAs on improperly translocated ribosomes. Binds to mitochondrial ribosomes in a GTP-dependent manner. This is Translation factor GUF1 homolog 1, mitochondrial from Trypanosoma cruzi (strain CL Brener).